We begin with the raw amino-acid sequence, 467 residues long: tRNA-2-methylthio-N(6)-dimethylallyladenosine synthase (467 aa).

Residues 15-135 (KKIFVKTYGC…LPEYVARLAN (121 aa)) enclose the MTTase N-terminal domain. [4Fe-4S] cluster-binding residues include cysteine 24, cysteine 60, cysteine 98, cysteine 177, cysteine 181, and cysteine 184. The region spanning 163–395 (LARGATAFLT…QALLGEQQLA (233 aa)) is the Radical SAM core domain. The TRAM domain maps to 398–461 (AGCAGRTMPV…RNSLRGRLRE (64 aa)).

The protein belongs to the methylthiotransferase family. MiaB subfamily. Monomer. [4Fe-4S] cluster serves as cofactor.

The protein resides in the cytoplasm. It carries out the reaction N(6)-dimethylallyladenosine(37) in tRNA + (sulfur carrier)-SH + AH2 + 2 S-adenosyl-L-methionine = 2-methylsulfanyl-N(6)-dimethylallyladenosine(37) in tRNA + (sulfur carrier)-H + 5'-deoxyadenosine + L-methionine + A + S-adenosyl-L-homocysteine + 2 H(+). Its function is as follows. Catalyzes the methylthiolation of N6-(dimethylallyl)adenosine (i(6)A), leading to the formation of 2-methylthio-N6-(dimethylallyl)adenosine (ms(2)i(6)A) at position 37 in tRNAs that read codons beginning with uridine. The polypeptide is tRNA-2-methylthio-N(6)-dimethylallyladenosine synthase (Parvibaculum lavamentivorans (strain DS-1 / DSM 13023 / NCIMB 13966)).